We begin with the raw amino-acid sequence, 384 residues long: Probable L-aspartate decarboxylase (384 aa).

Position 233 is an N6-(pyridoxal phosphate)lysine (Lys233).

This sequence belongs to the group II decarboxylase family. MfnA subfamily. Pyridoxal 5'-phosphate serves as cofactor.

It catalyses the reaction L-aspartate + H(+) = beta-alanine + CO2. It functions in the pathway cofactor biosynthesis; coenzyme A biosynthesis. Catalyzes the decarboxylation of L-aspartate to produce beta-alanine. This is Probable L-aspartate decarboxylase from Pyrococcus abyssi (strain GE5 / Orsay).